The chain runs to 340 residues: Ribosomal RNA large subunit methyltransferase F (340 aa).

This sequence belongs to the methyltransferase superfamily. METTL16/RlmF family.

It is found in the cytoplasm. The enzyme catalyses adenosine(1618) in 23S rRNA + S-adenosyl-L-methionine = N(6)-methyladenosine(1618) in 23S rRNA + S-adenosyl-L-homocysteine + H(+). Functionally, specifically methylates the adenine in position 1618 of 23S rRNA. In Dechloromonas aromatica (strain RCB), this protein is Ribosomal RNA large subunit methyltransferase F.